A 228-amino-acid polypeptide reads, in one-letter code: Ankyrin repeat domain-containing protein 46 (228 aa).

ANK repeat units lie at residues 11–40, 44–73, 77–103, and 107–138; these read QTSV…DPNI, RGRT…DLLA, QGNT…KIDI, and NGST…EVKG. Residues 195–215 form a helical membrane-spanning segment; sequence VLLLLVVIALLSLGIAYYVSG.

It is found in the membrane. This is Ankyrin repeat domain-containing protein 46 (ankrd46) from Danio rerio (Zebrafish).